Consider the following 170-residue polypeptide: tRNA-splicing endonuclease (170 aa).

Residues Tyr110, His116, and Lys147 contribute to the active site.

It belongs to the tRNA-intron endonuclease family. Archaeal short subfamily. As to quaternary structure, homotetramer; although the tetramer contains four active sites, only two participate in the cleavage. Therefore, it should be considered as a dimer of dimers.

It carries out the reaction pretRNA = a 3'-half-tRNA molecule with a 5'-OH end + a 5'-half-tRNA molecule with a 2',3'-cyclic phosphate end + an intron with a 2',3'-cyclic phosphate and a 5'-hydroxyl terminus.. In terms of biological role, endonuclease that removes tRNA introns. Cleaves pre-tRNA at the 5'- and 3'-splice sites to release the intron. The products are an intron and two tRNA half-molecules bearing 2',3' cyclic phosphate and 5'-OH termini. Recognizes a pseudosymmetric substrate in which 2 bulged loops of 3 bases are separated by a stem of 4 bp. This chain is tRNA-splicing endonuclease, found in Pyrococcus furiosus (strain ATCC 43587 / DSM 3638 / JCM 8422 / Vc1).